We begin with the raw amino-acid sequence, 274 residues long: Acetyl-coenzyme A carboxylase carboxyl transferase subunit alpha (274 aa).

The CoA carboxyltransferase C-terminal domain maps to Met1–Gly245.

It belongs to the AccA family. Acetyl-CoA carboxylase is a heterohexamer composed of biotin carboxyl carrier protein (AccB), biotin carboxylase (AccC) and two subunits each of ACCase subunit alpha (AccA) and ACCase subunit beta (AccD).

The protein localises to the cytoplasm. The catalysed reaction is N(6)-carboxybiotinyl-L-lysyl-[protein] + acetyl-CoA = N(6)-biotinyl-L-lysyl-[protein] + malonyl-CoA. Its pathway is lipid metabolism; malonyl-CoA biosynthesis; malonyl-CoA from acetyl-CoA: step 1/1. Its function is as follows. Component of the acetyl coenzyme A carboxylase (ACC) complex. First, biotin carboxylase catalyzes the carboxylation of biotin on its carrier protein (BCCP) and then the CO(2) group is transferred by the carboxyltransferase to acetyl-CoA to form malonyl-CoA. The chain is Acetyl-coenzyme A carboxylase carboxyl transferase subunit alpha from Clostridium acetobutylicum (strain ATCC 824 / DSM 792 / JCM 1419 / IAM 19013 / LMG 5710 / NBRC 13948 / NRRL B-527 / VKM B-1787 / 2291 / W).